Consider the following 488-residue polypeptide: Glutamyl-tRNA(Gln) amidotransferase subunit A (488 aa).

Residues K77 and S152 each act as charge relay system in the active site. The active-site Acyl-ester intermediate is S176.

The protein belongs to the amidase family. GatA subfamily. As to quaternary structure, heterotrimer of A, B and C subunits.

The enzyme catalyses L-glutamyl-tRNA(Gln) + L-glutamine + ATP + H2O = L-glutaminyl-tRNA(Gln) + L-glutamate + ADP + phosphate + H(+). Allows the formation of correctly charged Gln-tRNA(Gln) through the transamidation of misacylated Glu-tRNA(Gln) in organisms which lack glutaminyl-tRNA synthetase. The reaction takes place in the presence of glutamine and ATP through an activated gamma-phospho-Glu-tRNA(Gln). This Streptococcus pneumoniae serotype 19F (strain G54) protein is Glutamyl-tRNA(Gln) amidotransferase subunit A.